The primary structure comprises 75 residues: U14-hexatoxin-Mg1a (75 aa).

A signal peptide spans 1-19 (MKLTLFILIVFVVLANVYA). The propeptide occupies 20–31 (AGISERNIIGGR).

Post-translationally, contains 4 disulfide bonds. As to expression, expressed by the venom gland.

The protein localises to the secreted. In terms of biological role, no toxicity is observed upon intracranial injection into mice and intrathorax injection into crickets. This is U14-hexatoxin-Mg1a from Macrothele gigas (Japanese funnel web spider).